Consider the following 280-residue polypeptide: Cis-2,3-dihydrobiphenyl-2,3-diol dehydrogenase (280 aa).

9 to 33 serves as a coordination point for NAD(+); it reads LVTGGCAGLGRAIVDRFVCEGARVA. S142 is a binding site for substrate. Catalysis depends on Y155, which acts as the Proton acceptor.

The protein belongs to the short-chain dehydrogenases/reductases (SDR) family.

The catalysed reaction is (2R,3S)-3-phenylcyclohexa-3,5-diene-1,2-diol + NAD(+) = biphenyl-2,3-diol + NADH + H(+). Its pathway is xenobiotic degradation; biphenyl degradation; 2-hydroxy-2,4-pentadienoate and benzoate from biphenyl: step 2/4. The protein is Cis-2,3-dihydrobiphenyl-2,3-diol dehydrogenase (bphB) of Rhodococcus globerulus.